A 545-amino-acid chain; its full sequence is Phenylalanine--tRNA ligase beta subunit (545 aa).

Positions 268–343 (FLHKIQNVRE…MSIGYNNLEP (76 aa)) constitute a B5 domain. Residues Asp-321, Asp-327, Glu-330, and Asp-331 each contribute to the Mg(2+) site.

It belongs to the phenylalanyl-tRNA synthetase beta subunit family. Type 2 subfamily. As to quaternary structure, tetramer of two alpha and two beta subunits. Requires Mg(2+) as cofactor.

It localises to the cytoplasm. It catalyses the reaction tRNA(Phe) + L-phenylalanine + ATP = L-phenylalanyl-tRNA(Phe) + AMP + diphosphate + H(+). The chain is Phenylalanine--tRNA ligase beta subunit from Saccharolobus islandicus (strain Y.N.15.51 / Yellowstone #2) (Sulfolobus islandicus).